The primary structure comprises 546 residues: Cytochrome P450 monooxygenase fumoB (546 aa).

A helical membrane pass occupies residues 13 to 33 (LGYYEKLAGILGIIGLVLLFW). N-linked (GlcNAc...) asparagine glycosylation occurs at Asn147. Cys488 lines the heme pocket.

The protein belongs to the cytochrome P450 family. Heme serves as cofactor.

The protein resides in the membrane. It participates in secondary metabolite biosynthesis. Cytochrome P450 monooxygenase; part of the gene cluster that mediates the biosynthesis of fumosorinone, a 2-pyridone alkaloid that acts as an inhibitor of protein tyrosine phosphatase 1B which is implicated asa negative regulator of insulin receptor signaling and a potential drug target for the treatment of type II diabetes and other associated metabolic syndromes. The polyketide-amino acid backbone of fumosorinone is first assembled by the PKS-NRPS hybrid fumoS. The PKS modules condense one acetyl-CoA starter unit with 7 malonyl-CoA units, programmed C-methylations occurring after the first 3 and the sixth extensions, and cycles of full reduction occurring after the first 2 extensions. Because fumoS lacks a designated enoyl reductase (ER) domain, the required activity is provided the enoyl reductase fumoC. Upon formation of the polyketide backbone on the thiotemplate, the polyketide is transferred to the NRPS module and linked to tyrosine to produce the acyltetramic acid intermediate called prefumosorinone A. The cytochrome P450 monooxygenase fumoA then probably catalyzes an unprecedented oxidative ring expansion of prefumosorinone A to form prefumosorinone B which contains the 2-pyridone core of fumosorinone. The cytochrome P450 monooxygenase fumoB might hydroxylate the nitrogen of prefumosorinone B, but not the acyltetramic acid prefumosorinone A, to form fumosorinone. The polypeptide is Cytochrome P450 monooxygenase fumoB (Cordyceps fumosorosea (strain ARSEF 2679) (Isaria fumosorosea)).